A 368-amino-acid chain; its full sequence is Anaphase-promoting complex subunit MND2 (368 aa).

2 disordered regions span residues 140–167 (AQNAEGNNEEDFRQHDSREEDPRNNGSI) and 286–336 (RNPY…GITP). Over residues 149 to 162 (EDFRQHDSREEDPR) the composition is skewed to basic and acidic residues. Serine 293 carries the post-translational modification Phosphoserine.

The protein belongs to the APC15 family. The APC/C is composed of at least 13 subunits that stay tightly associated throughout the cell cycle: APC1, APC2, APC4, APC5, APC9, APC11, CDC16, CDC23, CDC26, CDC27, DOC1, MND2 and SWM1. MND2 interacts directly with APC1, APC5 and CDC23.

It functions in the pathway protein modification; protein ubiquitination. Its function is as follows. Component of the anaphase promoting complex/cyclosome (APC/C), a cell cycle-regulated E3 ubiquitin-protein ligase complex that controls progression through mitosis and the G1 phase of the cell cycle. The APC/C is thought to confer substrate specificity and, in the presence of ubiquitin-conjugating E2 enzymes, it catalyzes the formation of protein-ubiquitin conjugates that are subsequently degraded by the 26S proteasome. In early mitosis, the APC/C is activated by CDC20 and targets securin PDS1, the B-type cyclin CLB5, and other anaphase inhibitory proteins for proteolysis, thereby triggering the separation of sister chromatids at the metaphase-to-anaphase transition. In late mitosis and in G1, degradation of CLB5 allows activation of the APC/C by CDH1, which is needed to destroy CDC20 and the B-type cyclin CLB2 to allow exit from mitosis and creating the low CDK state necessary for cytokinesis and for reforming prereplicative complexes in G1 prior to another round of replication. The chain is Anaphase-promoting complex subunit MND2 (MND2) from Saccharomyces cerevisiae (strain ATCC 204508 / S288c) (Baker's yeast).